Reading from the N-terminus, the 185-residue chain is Large ribosomal subunit protein uL5 (185 aa).

This sequence belongs to the universal ribosomal protein uL5 family. In terms of assembly, part of the 50S ribosomal subunit; part of the 5S rRNA/L5/L18/L25 subcomplex. Contacts the 5S rRNA and the P site tRNA. Forms a bridge to the 30S subunit in the 70S ribosome.

In terms of biological role, this is one of the proteins that bind and probably mediate the attachment of the 5S RNA into the large ribosomal subunit, where it forms part of the central protuberance. In the 70S ribosome it contacts protein S13 of the 30S subunit (bridge B1b), connecting the 2 subunits; this bridge is implicated in subunit movement. Contacts the P site tRNA; the 5S rRNA and some of its associated proteins might help stabilize positioning of ribosome-bound tRNAs. This chain is Large ribosomal subunit protein uL5, found in Sinorhizobium medicae (strain WSM419) (Ensifer medicae).